Here is a 263-residue protein sequence, read N- to C-terminus: 3-methyl-2-oxobutanoate hydroxymethyltransferase (263 aa).

2 residues coordinate Mg(2+): D45 and D84. 3-methyl-2-oxobutanoate contacts are provided by residues 45-46 (DS), D84, and K112. E114 contacts Mg(2+). E181 functions as the Proton acceptor in the catalytic mechanism.

It belongs to the PanB family. As to quaternary structure, homodecamer; pentamer of dimers. Requires Mg(2+) as cofactor.

It is found in the cytoplasm. The catalysed reaction is 3-methyl-2-oxobutanoate + (6R)-5,10-methylene-5,6,7,8-tetrahydrofolate + H2O = 2-dehydropantoate + (6S)-5,6,7,8-tetrahydrofolate. Its pathway is cofactor biosynthesis; (R)-pantothenate biosynthesis; (R)-pantoate from 3-methyl-2-oxobutanoate: step 1/2. Catalyzes the reversible reaction in which hydroxymethyl group from 5,10-methylenetetrahydrofolate is transferred onto alpha-ketoisovalerate to form ketopantoate. In Proteus mirabilis (strain HI4320), this protein is 3-methyl-2-oxobutanoate hydroxymethyltransferase.